An 878-amino-acid chain; its full sequence is Probable glucan endo-1,3-beta-glucosidase ARB_02077 (878 aa).

The N-terminal stretch at 1–27 (MARGLVSSLLLGQLLLVLVGLFSPAGA) is a signal peptide. N-linked (GlcNAc...) asparagine glycans are attached at residues N228, N257, N290, and N297. Residues 373–472 (AGSGSKAKRL…TACPSAPVTK (100 aa)) form a disordered region. Residues 400 to 416 (APAPQPPAQSTAPPYPI) show a composition bias toward pro residues. A compositionally biased stretch (low complexity) spans 433–452 (VPTRVPTGGVPSGTTGTAPS). Residues N505, N659, N795, and N862 are each glycosylated (N-linked (GlcNAc...) asparagine).

It belongs to the glycosyl hydrolase 55 family.

The protein resides in the secreted. The enzyme catalyses Hydrolysis of (1-&gt;3)-beta-D-glucosidic linkages in (1-&gt;3)-beta-D-glucans.. Functionally, probable glucan endo-1,3-beta-glucosidase involved in the hydrolysis of fungal cell wall. Classified as a small-oligosaccharide-producing type based its the end products: glucose, laminaribiose or laminaritetraose. This Arthroderma benhamiae (strain ATCC MYA-4681 / CBS 112371) (Trichophyton mentagrophytes) protein is Probable glucan endo-1,3-beta-glucosidase ARB_02077.